We begin with the raw amino-acid sequence, 222 residues long: MEIKLNKYIDHTLLKPEATKQDIINLCNQAIQYDFATVCVNTCWTSFCKELLKNSNVGITNVVGFPLGACLTEVKVFEVKKAIENGCDEIDMVLNIGALKDKDYDLVLNDMKEVKKAANDHVVKVILENCLLTREEIIKACELAVEAGLEFVKTSTGFNKSGANIEDIKLMSKVVKNKAQVKAAGGVRTYDDAIAMINAGASRLGTSGSVEIMLKQENKSNY.

Catalysis depends on Asp91, which acts as the Proton donor/acceptor. Lys153 acts as the Schiff-base intermediate with acetaldehyde in catalysis. Catalysis depends on Lys182, which acts as the Proton donor/acceptor.

It belongs to the DeoC/FbaB aldolase family. DeoC type 1 subfamily.

The protein resides in the cytoplasm. The catalysed reaction is 2-deoxy-D-ribose 5-phosphate = D-glyceraldehyde 3-phosphate + acetaldehyde. It functions in the pathway carbohydrate degradation; 2-deoxy-D-ribose 1-phosphate degradation; D-glyceraldehyde 3-phosphate and acetaldehyde from 2-deoxy-alpha-D-ribose 1-phosphate: step 2/2. Its function is as follows. Catalyzes a reversible aldol reaction between acetaldehyde and D-glyceraldehyde 3-phosphate to generate 2-deoxy-D-ribose 5-phosphate. The chain is Deoxyribose-phosphate aldolase from Mycoplasma capricolum subsp. capricolum (strain California kid / ATCC 27343 / NCTC 10154).